The following is a 305-amino-acid chain: Tyrosine recombinase XerC (305 aa).

The Core-binding (CB) domain maps to T4–E95. The 183-residue stretch at L116 to T298 folds into the Tyr recombinase domain. Catalysis depends on residues R159, K182, H250, R253, and H276. Y285 functions as the O-(3'-phospho-DNA)-tyrosine intermediate in the catalytic mechanism.

This sequence belongs to the 'phage' integrase family. XerC subfamily. In terms of assembly, forms a cyclic heterotetrameric complex composed of two molecules of XerC and two molecules of XerD.

It localises to the cytoplasm. Functionally, site-specific tyrosine recombinase, which acts by catalyzing the cutting and rejoining of the recombining DNA molecules. The XerC-XerD complex is essential to convert dimers of the bacterial chromosome into monomers to permit their segregation at cell division. It also contributes to the segregational stability of plasmids. The chain is Tyrosine recombinase XerC from Rickettsia rickettsii (strain Iowa).